Consider the following 185-residue polypeptide: MSSPSKRREMDLMKLMMSDYKVEMINDGMQEFFVEFSGPKDSIYEGGVWKIRVELPDAYPYKSPSVGFITKIYHPNVDEMSGSVCLDVINQTWSPMFDLVNVFETFLPQLLLYPNPSDPLNGEAAALMMRDRPTYEQRVKEYCEKYAKPRADTEEMSSDDEMSEDEYASDGDDEDDVAIAGKLDP.

A UBC core domain is found at 1-148 (MSSPSKRREM…VKEYCEKYAK (148 aa)). Cys-85 serves as the catalytic Glycyl thioester intermediate. Residues 146–185 (YAKPRADTEEMSSDDEMSEDEYASDGDDEDDVAIAGKLDP) form a disordered region. Over residues 154 to 177 (EEMSSDDEMSEDEYASDGDDEDDV) the composition is skewed to acidic residues.

The protein belongs to the ubiquitin-conjugating enzyme family. As to expression, expressed in developing ovules, but not in vascular tissues.

The enzyme catalyses S-ubiquitinyl-[E1 ubiquitin-activating enzyme]-L-cysteine + [E2 ubiquitin-conjugating enzyme]-L-cysteine = [E1 ubiquitin-activating enzyme]-L-cysteine + S-ubiquitinyl-[E2 ubiquitin-conjugating enzyme]-L-cysteine.. Its pathway is protein modification; protein ubiquitination. Accepts the ubiquitin from the E1 complex and catalyzes its covalent attachment to other proteins. In Arabidopsis thaliana (Mouse-ear cress), this protein is Ubiquitin-conjugating enzyme E2 5 (UBC5).